Here is a 326-residue protein sequence, read N- to C-terminus: HTH-type transcriptional regulator SyrM (326 aa).

The region spanning 32-89 (IDLNLLVDLEALLQYRHITQAAQHVGRSQPAMSRALSRLRGMLKDDLLVAGSRGLVLT) is the HTH lysR-type domain. The segment at residues 49-68 (ITQAAQHVGRSQPAMSRALS) is a DNA-binding region (H-T-H motif).

The protein belongs to the LysR transcriptional regulatory family.

In terms of biological role, acts in trans to stimulate nod gene expression via nodD3 and exo gene expression via SyrA. The sequence is that of HTH-type transcriptional regulator SyrM (syrM) from Rhizobium meliloti (strain 1021) (Ensifer meliloti).